A 239-amino-acid chain; its full sequence is tRNA (guanine-N(1)-)-methyltransferase (239 aa).

S-adenosyl-L-methionine contacts are provided by residues G109 and 133 to 138 (IGDYVL). Disordered stretches follow at residues 163-187 (PASRHDDSHSPALDRRLEGPSYTRP) and 217-239 (QRTRERRPELLADPVGPQDDPGR). 2 stretches are compositionally biased toward basic and acidic residues: residues 165–180 (SRHDDSHSPALDRRLE) and 217–226 (QRTRERRPEL).

It belongs to the RNA methyltransferase TrmD family. As to quaternary structure, homodimer.

The protein localises to the cytoplasm. The catalysed reaction is guanosine(37) in tRNA + S-adenosyl-L-methionine = N(1)-methylguanosine(37) in tRNA + S-adenosyl-L-homocysteine + H(+). Its function is as follows. Specifically methylates guanosine-37 in various tRNAs. The sequence is that of tRNA (guanine-N(1)-)-methyltransferase from Mycolicibacterium paratuberculosis (strain ATCC BAA-968 / K-10) (Mycobacterium paratuberculosis).